Reading from the N-terminus, the 473-residue chain is Mitochondrial adenyl nucleotide antiporter SLC25A24-A (473 aa).

Residues 1–173 are regulatory N-terminal domain; the sequence is MLEQVQKFLL…RFWKHSTVLD (173 aa). Topologically, residues 1–197 are mitochondrial intermembrane; it reads MLEQVQKFLL…EKKTGQWWKH (197 aa). 4 consecutive EF-hand domains span residues 19–54, 55–88, 86–121, and 122–157; these read DSHTRYAELFHKLDVNKDGKVDILELQEGLKAMGMA, VGKGAEEKIVEAGDTNKDGHLDFGEFMRYLEEHE, EHEKKMKIAFTSLDKNKDGKIESSEVMNSLKTLGIN, and ISLDHAEKILKSMDSDGTLTVDWNEWRDHFLFNPAD. Asp32, Asn34, Asp36, Lys38, Glu43, Asp68, Asn70, Asp72, His74, Glu79, Asp99, Asn101, Asp103, Lys105, Glu110, Asp135, Asp137, Thr139, Thr141, and Glu146 together coordinate Ca(2+). The linker region stretch occupies residues 159-168; it reads IQQIIRFWKH. A C-terminal transmembrane transporter domain region spans residues 174–473; the sequence is IGDSLTIPDE…YEKMKIQLGI (300 aa). Solcar repeat units follow at residues 192–277, 285–370, and 382–470; these read GQWW…YKKL, LGTA…LKNY, and PGVL…MKIQ. Residues 198–215 traverse the membrane as a helical segment; that stretch reads LLAGGMAGAVSRTGTAPL. Residues 216–251 lie on the Mitochondrial matrix side of the membrane; it reads DRLKVMMQVHGTKGNSNIITGLKQMVKEGGVRSLWR. Residues 252-271 traverse the membrane as a helical segment; the sequence is GNGVNVIKIAPETAMKFWAY. Topologically, residues 272–294 are mitochondrial intermembrane; it reads EQYKKLFTSESGKLGTAERFIAG. The helical transmembrane segment at 295 to 308 threads the bilayer; that stretch reads SLAGATAQTSIYPM. The Mitochondrial matrix segment spans residues 309–344; sequence EVLKTRLAVGKTGQYSGMFDCAKKIMQKEGILAFYK. Residues 345–364 form a helical membrane-spanning segment; that stretch reads GYIPNILGIIPYAGIDLAIY. Over 365–387 the chain is Mitochondrial intermembrane; sequence ETLKNYWLQNYAKDSANPGVLVL. A helical membrane pass occupies residues 388 to 405; sequence LGCGTVSSTCGQLASYPL. The Mitochondrial matrix portion of the chain corresponds to 406-444; the sequence is ALIRTRMQAQASIEGAPQLNMGGLFRKIVAKEGFFGLYT. The helical transmembrane segment at 445–464 threads the bilayer; that stretch reads GIAPNFLKVLPAVSISYVVY. Residues 465 to 473 are Mitochondrial intermembrane-facing; that stretch reads EKMKIQLGI.

This sequence belongs to the mitochondrial carrier (TC 2.A.29) family. As to quaternary structure, monomer.

It is found in the mitochondrion inner membrane. The catalysed reaction is Mg(2+)(out) + phosphate(in) + ATP(out) = Mg(2+)(in) + phosphate(out) + ATP(in). It catalyses the reaction ADP(out) + phosphate(in) + H(+)(out) = ADP(in) + phosphate(out) + H(+)(in). It carries out the reaction AMP(out) + phosphate(in) = AMP(in) + phosphate(out). The enzyme catalyses phosphate(in) + ATP(out) + 2 H(+)(out) = phosphate(out) + ATP(in) + 2 H(+)(in). The catalysed reaction is dADP(in) + ADP(out) = dADP(out) + ADP(in). It catalyses the reaction Mg(2+)(in) + ADP(out) + ATP(in) + H(+)(out) = Mg(2+)(out) + ADP(in) + ATP(out) + H(+)(in). It carries out the reaction ADP(out) + diphosphate(in) = ADP(in) + diphosphate(out). The enzyme catalyses dAMP(in) + ADP(out) + H(+)(out) = dAMP(out) + ADP(in) + H(+)(in). The catalysed reaction is 3'-AMP(in) + ADP(out) + H(+)(out) = 3'-AMP(out) + ADP(in) + H(+)(in). It catalyses the reaction dAMP(out) + phosphate(in) = dAMP(in) + phosphate(out). It carries out the reaction 3'-AMP(out) + phosphate(in) = 3'-AMP(in) + phosphate(out). The enzyme catalyses dADP(out) + phosphate(in) + H(+)(out) = dADP(in) + phosphate(out) + H(+)(in). Its activity is regulated as follows. Activated by an increase in cytosolic calcium levels that induce a conformational change of the N-terminal regulatory domain, uncapping the channel and allowing transport. Inhibited by bathophenanthroline, mersalyl, p-hydroxymercuribenzoate, bromcresol purple and tannic acid. Functionally, electroneutral antiporter that mediates the transport of adenyl nucleotides through the inner mitochondrial membrane. Originally identified as an ATP-magnesium/inorganic phosphate antiporter, it also acts as a broad specificity adenyl nucleotide antiporter. By regulating the mitochondrial matrix adenyl nucleotide pool could adapt to changing cellular energetic demands and indirectly regulate adenyl nucleotide-dependent metabolic pathways. The polypeptide is Mitochondrial adenyl nucleotide antiporter SLC25A24-A (slc25a24-a) (Xenopus laevis (African clawed frog)).